The following is a 491-amino-acid chain: Lysine--tRNA ligase (491 aa).

Mg(2+) contacts are provided by glutamate 400 and glutamate 407.

The protein belongs to the class-II aminoacyl-tRNA synthetase family. In terms of assembly, homodimer. Mg(2+) serves as cofactor.

The protein resides in the cytoplasm. It catalyses the reaction tRNA(Lys) + L-lysine + ATP = L-lysyl-tRNA(Lys) + AMP + diphosphate. The protein is Lysine--tRNA ligase of Mesomycoplasma hyopneumoniae (strain J / ATCC 25934 / NCTC 10110) (Mycoplasma hyopneumoniae).